The following is a 479-amino-acid chain: Catalase A (479 aa).

His-63 is an active-site residue. Position 346 (Tyr-346) interacts with heme.

It belongs to the catalase family. Heme serves as cofactor.

The protein localises to the peroxisome matrix. It catalyses the reaction 2 H2O2 = O2 + 2 H2O. In terms of biological role, catalyzes the degradation of hydrogen peroxide (H(2)O(2)) generated by peroxisomal oxidases to water and oxygen, thereby protecting cells from the toxic effects of hydrogen peroxide. The sequence is that of Catalase A (catA) from Botryotinia fuckeliana (Noble rot fungus).